A 537-amino-acid chain; its full sequence is Pancreatic secretory granule membrane major glycoprotein GP2 (537 aa).

The signal sequence occupies residues M1 to A28. The beta hairpin stretch occupies residues S41–F60. Intrachain disulfides connect C48–C59, C63–C157, C85–C172, C107–C145, C113–C177, C138–C146, C190–C200, C194–C209, C211–C241, C229–C320, and C261–C284. Residues D61–G81 form a D10C region. N65 carries N-linked (GlcNAc...) (high mannose) asparagine glycosylation. Residues N88, N122, and N134 are each glycosylated (N-linked (GlcNAc...) asparagine). Positions V186–G230 constitute an EGF-like domain. Residues N204, N216, and N260 are each glycosylated (N-linked (GlcNAc...) asparagine). The ZP-N stretch occupies residues D228–A321. A ZP domain is found at D228 to S484. N-linked (GlcNAc...) asparagine glycans are attached at residues N291 and N342. The interval Y322–V345 is flexible ZP-N/ZP-C linker. Residues D346–L357 are internal hydrophobic patch (IHP). The interval D346–S484 is ZP-C. N362 is a glycosylation site (N-linked (GlcNAc...) asparagine). Disulfide bonds link C401–C461, C422–C477, and C466–C473. Positions L491 to P499 are external hydrophobic patch (EHP). A lipid anchor (GPI-anchor amidated asparagine) is attached at N512. Residues G513–F537 constitute a propeptide, removed in mature form.

As to quaternary structure, interacts with SYCN. Interacts with bacterial adhesin fimH. In terms of processing, N-glycosylated. Glycosylated Asn-65 may be required for interaction with bacterial adhesin fimH. As to expression, expressed in pancreas (at protein level). Specifically expressed by M (microfold) cells which are atypical epithelial cells of the intestine (at protein level).

Its subcellular location is the zymogen granule membrane. It localises to the secreted. The protein localises to the cell membrane. It is found in the apical cell membrane. The protein resides in the membrane raft. Its subcellular location is the endosome. In terms of biological role, functions as an intestinal M-cell transcytotic receptor specific for type-I-piliated bacteria that participates in the mucosal immune response toward these bacteria. At the apical membrane of M-cells it binds fimH, a protein of the bacteria type I pilus tip. Internalizes bound bacteria, like E.coli and S.typhimurium, from the lumen of the intestine and delivers them, through M-cells, to the underlying organized lymphoid follicles where they are captured by antigen-presenting dendritic cells to elicit a mucosal immune response. In Homo sapiens (Human), this protein is Pancreatic secretory granule membrane major glycoprotein GP2.